A 257-amino-acid polypeptide reads, in one-letter code: DNA repair protein RecO (257 aa).

This sequence belongs to the RecO family.

In terms of biological role, involved in DNA repair and RecF pathway recombination. The protein is DNA repair protein RecO of Clostridium kluyveri (strain ATCC 8527 / DSM 555 / NBRC 12016 / NCIMB 10680 / K1).